The chain runs to 105 residues: V-type ATP synthase subunit F (105 aa).

Belongs to the V-ATPase F subunit family.

Produces ATP from ADP in the presence of a proton gradient across the membrane. In Clostridium perfringens (strain 13 / Type A), this protein is V-type ATP synthase subunit F.